Here is a 396-residue protein sequence, read N- to C-terminus: MAKAKFERLKPHVNVGTIGHVDHGKTTLTAAIATVAAITSGGEAKDYASIDSAPEEKARGITINTSHVEYDTPSRHYAHVDCPGHADYVKNMITGAAQMDGAILVVSATDGPMPQTREHILLSRQVGVPYIVVFMNKCDVVDDEELLELVEMEVRELLSDYDFPGDDTPIIHGSATEALKGSQEKYGQPAVVELLNVLDTYIPEPERDIDKAFLMPIEDVFSISGRGTVVTGRVESGIVRVGDEIEIVGIRDTQKTTCTGVEMFRKLLDEGRAGENCGVLLRGTKREDVQRGQVLAKPGSITPHTKFDAEVYVLSKEEGGRHTPFLNGYRPQFYFRTTDVTGAIQLQDGTEMVMPGDNVEMGVELIHPIAMDKGLRFAIREGGRTVGAGVVANVLN.

Residues 10–206 form the tr-type G domain; sequence KPHVNVGTIG…VLDTYIPEPE (197 aa). The interval 19–26 is G1; it reads GHVDHGKT. 19 to 26 contributes to the GTP binding site; the sequence is GHVDHGKT. Thr26 lines the Mg(2+) pocket. Positions 60-64 are G2; that stretch reads GITIN. The interval 81-84 is G3; that stretch reads DCPG. GTP is bound by residues 81–85 and 136–139; these read DCPGH and NKCD. A G4 region spans residues 136 to 139; it reads NKCD. The segment at 174 to 176 is G5; the sequence is SAT.

Belongs to the TRAFAC class translation factor GTPase superfamily. Classic translation factor GTPase family. EF-Tu/EF-1A subfamily. As to quaternary structure, monomer.

Its subcellular location is the cytoplasm. The enzyme catalyses GTP + H2O = GDP + phosphate + H(+). Its function is as follows. GTP hydrolase that promotes the GTP-dependent binding of aminoacyl-tRNA to the A-site of ribosomes during protein biosynthesis. The protein is Elongation factor Tu of Psychrobacter cryohalolentis (strain ATCC BAA-1226 / DSM 17306 / VKM B-2378 / K5).